The chain runs to 315 residues: Protein LST8 homolog (315 aa).

WD repeat units lie at residues 1-31 (MGDQ…KTMR), 33-71 (VETS…TAPV), 76-115 (GVQK…PHCS), 119-158 (DCES…HECI), 161-200 (EVDA…DQKM), 211-250 (AHTR…KWRE), 253-292 (IENY…PTRE), and 295-315 (GHTK…KVNH).

This sequence belongs to the WD repeat LST8 family.

It localises to the cytoplasm. The sequence is that of Protein LST8 homolog from Drosophila pseudoobscura pseudoobscura (Fruit fly).